We begin with the raw amino-acid sequence, 194 residues long: FMN-dependent NADH:quinone oxidoreductase 1 (194 aa).

FMN contacts are provided by residues S9 and 85–88 (MYNF).

It belongs to the azoreductase type 1 family. In terms of assembly, homodimer. FMN serves as cofactor.

The catalysed reaction is 2 a quinone + NADH + H(+) = 2 a 1,4-benzosemiquinone + NAD(+). The enzyme catalyses N,N-dimethyl-1,4-phenylenediamine + anthranilate + 2 NAD(+) = 2-(4-dimethylaminophenyl)diazenylbenzoate + 2 NADH + 2 H(+). Quinone reductase that provides resistance to thiol-specific stress caused by electrophilic quinones. Its function is as follows. Also exhibits azoreductase activity. Catalyzes the reductive cleavage of the azo bond in aromatic azo compounds to the corresponding amines. The chain is FMN-dependent NADH:quinone oxidoreductase 1 from Xanthomonas euvesicatoria pv. vesicatoria (strain 85-10) (Xanthomonas campestris pv. vesicatoria).